A 748-amino-acid chain; its full sequence is MRVGCCLLLKPIRQRLCTASISSRHIMRWCATSSSNINSTETAAKMPDDDVSGSLSAPSLLKYKIEPSTATMGAPRPPHDDDRAFCTLASFPPSHIRNFAVVAHVDHGKTTLSDAILRRTGVLSGSQVGTYTDRLLVERERGITIKAQTCSIFVVRDGEEFLLNLIDTPGHVDFQYEVSRSLSASDAALLLVDAAQGIEAQTMAHFHMALDRGLTILPVLTKMDAVLSDAPVDRALQDLEDSTGLLRREVLFTSAKEQVGIEALLHAIIERVPPPTGLLGLSDLQQLPPLLPGSAERAAMEEKMVPLRALLFDSWTSECGGGLRRPAPRGGEKVNSGNDNDSNLICLVRIIDGTLTAKTVVTFYQSQRRCEALEVGIIHPELRPTAALTAGMVGYVVFSRVRGEEFFVGETLYTLPTRKFAREDIVPVPGFRRVQPVVFAGFYPDEGEYITQLREAVEKLRVNEPAVTMEPLDCPALGSGLQLGFLGMLHMQVFQERLLAEFGQRVLVTPPLVQYKYREAGSDEEEPLKPLTVHTWKWIHEGAACYLEPYVTATIITRREHFQAIDSEALRRFRGEQLDMRVLDDARVLVRYKMPLADLARGFFAVVKSLSHGYASLDYGDPVYEEADLVKVDVLVQKSRISALSVICPRSEAPSIGKRIVSSLKSNLTRTAVDIPLQAMVGSKIVARETVKAYRKDVTAKIHAGDISRKQKKWNDQKKGKERMARRTVGAVTLDQSILAAAMGAISL.

The N-terminal 29 residues, 1–29 (MRVGCCLLLKPIRQRLCTASISSRHIMRW), are a transit peptide targeting the mitochondrion. Residues 94–276 (SHIRNFAVVA…AIIERVPPPT (183 aa)) enclose the tr-type G domain. Residues 103–110 (AHVDHGKT), 167–171 (DTPGH), and 221–224 (TKMD) contribute to the GTP site.

The protein belongs to the TRAFAC class translation factor GTPase superfamily. Classic translation factor GTPase family. LepA subfamily.

It is found in the mitochondrion inner membrane. It carries out the reaction GTP + H2O = GDP + phosphate + H(+). Its function is as follows. Promotes mitochondrial protein synthesis. May act as a fidelity factor of the translation reaction, by catalyzing a one-codon backward translocation of tRNAs on improperly translocated ribosomes. Binds to mitochondrial ribosomes in a GTP-dependent manner. The polypeptide is Translation factor GUF1 homolog 1, mitochondrial (Trypanosoma cruzi (strain CL Brener)).